A 539-amino-acid polypeptide reads, in one-letter code: uncharacterized protein (539 aa).

It belongs to the transposase 25 family.

This is an uncharacterized protein from Sinorhizobium fredii (strain NBRC 101917 / NGR234).